Here is a 67-residue protein sequence, read N- to C-terminus: DNA-directed RNA polymerases I, II, and III subunit RPABC5 (67 aa).

Residues cysteine 7, cysteine 10, cysteine 44, and cysteine 45 each contribute to the Zn(2+) site.

This sequence belongs to the archaeal Rpo10/eukaryotic RPB10 RNA polymerase subunit family. In terms of assembly, component of the RNA polymerase I (Pol I), RNA polymerase II (Pol II) and RNA polymerase III (Pol III) complexes consisting of at least 13, 12 and 17 subunits, respectively.

It is found in the nucleus. DNA-dependent RNA polymerase catalyzes the transcription of DNA into RNA using the four ribonucleoside triphosphates as substrates. Common component of RNA polymerases I, II and III which synthesize ribosomal RNA precursors, mRNA precursors and many functional non-coding RNAs, and a small RNAs, such as 5S rRNA and tRNAs, respectively. Pol II is the central component of the basal RNA polymerase II transcription machinery. Pols are composed of mobile elements that move relative to each other. In Pol II, Polr2L is part of the core element with the central large cleft. This is DNA-directed RNA polymerases I, II, and III subunit RPABC5 from Drosophila melanogaster (Fruit fly).